Here is a 306-residue protein sequence, read N- to C-terminus: Latrophilin receptor-like protein A (306 aa).

The Extracellular segment spans residues 1–15 (MPSQLLNTVLSYLTD). The helical transmembrane segment at 16–36 (ILLSLSIVGSFLTIFTFMLYP) threads the bilayer. The Cytoplasmic segment spans residues 37–41 (KLRSY). The helical transmembrane segment at 42-62 (PIKLIIYLCMSIVFSLFFFEI) threads the bilayer. At 63–70 (SFRSSNSL) the chain is on the extracellular side. The helical transmembrane segment at 71-91 (FCIPAAILVHYFFLANFFWTF) threads the bilayer. At 92–113 (SVSFNFFQMIVKRNRDSEFYER) the chain is on the cytoplasmic side. A helical membrane pass occupies residues 114–134 (YYHLISWGIPFIIIIFCAAFK). Residues 135-152 (KYVDRGGFCYLEDQYSVY) lie on the Extracellular side of the membrane. The chain crosses the membrane as a helical span at residues 153–173 (FGFFMPGVIIVCSNICIYVFV). The Cytoplasmic segment spans residues 174 to 196 (AKEIYKTLRHTPTQKRQTVKEFR). A helical transmembrane segment spans residues 197–217 (VYFSIFVSIGSSWIFGFIYMF). The Extracellular segment spans residues 218-222 (SDSNS). The helical transmembrane segment at 223 to 243 (IIGYIFLILFSISTSLQGFFI) threads the bilayer. The Cytoplasmic segment spans residues 244-306 (FISYCLNYKV…TTTTTNVYSA (63 aa)). The disordered stretch occupies residues 279–306 (TTQSGPTGTTDSSSTMTSTTTTTNVYSA).

Belongs to the G-protein coupled receptor 2 family. LN-TM7 subfamily.

The protein localises to the membrane. In Dictyostelium discoideum (Social amoeba), this protein is Latrophilin receptor-like protein A (lrlA).